The chain runs to 151 residues: Major curlin subunit (151 aa).

The signal sequence occupies residues 1 to 20; that stretch reads MKLLKVAAIAAIVFSGSALA. Residues 71-90 form a disordered region; sequence TQHGGGNGADVGQGSDDSSI.

Belongs to the CsgA/CsgB family.

Its subcellular location is the fimbrium. Functionally, curlin is the structural subunit of the curli fimbriae. Curli are coiled surface structures that assemble preferentially at growth temperatures below 37 degrees Celsius. Curli can bind to fibronectin. The protein is Major curlin subunit (csgA) of Escherichia coli (strain K12).